A 524-amino-acid polypeptide reads, in one-letter code: RNA-splicing ligase RtcB homolog 2 (524 aa).

Residues aspartate 141, cysteine 144, histidine 249, histidine 281, and histidine 372 each contribute to the Mn(2+) site. 248-252 (NHYLE) serves as a coordination point for GMP. Residues 372-373 (HN), 421-424 (GGSM), serine 428, 447-450 (HGAG), and lysine 523 each bind GMP. The active-site GMP-histidine intermediate is histidine 447.

Belongs to the RtcB family. In terms of assembly, catalytic component of the tRNA-splicing ligase complex. The cofactor is Mn(2+).

It catalyses the reaction a 3'-end 3'-phospho-ribonucleotide-RNA + a 5'-end dephospho-ribonucleoside-RNA + GTP = a ribonucleotidyl-ribonucleotide-RNA + GMP + diphosphate. The catalysed reaction is a 3'-end 2',3'-cyclophospho-ribonucleotide-RNA + a 5'-end dephospho-ribonucleoside-RNA + GTP + H2O = a ribonucleotidyl-ribonucleotide-RNA + GMP + diphosphate + H(+). Functionally, catalytic subunit of the tRNA-splicing ligase complex that acts by directly joining spliced tRNA halves to mature-sized tRNAs by incorporating the precursor-derived splice junction phosphate into the mature tRNA as a canonical 3',5'-phosphodiester. May act as an RNA ligase with broad substrate specificity, and may function toward other RNAs. The polypeptide is RNA-splicing ligase RtcB homolog 2 (Entamoeba dispar (strain ATCC PRA-260 / SAW760)).